Consider the following 163-residue polypeptide: Large ribosomal subunit protein uL10 (163 aa).

This sequence belongs to the universal ribosomal protein uL10 family. In terms of assembly, part of the ribosomal stalk of the 50S ribosomal subunit. The N-terminus interacts with L11 and the large rRNA to form the base of the stalk. The C-terminus forms an elongated spine to which L12 dimers bind in a sequential fashion forming a multimeric L10(L12)X complex.

Functionally, forms part of the ribosomal stalk, playing a central role in the interaction of the ribosome with GTP-bound translation factors. This is Large ribosomal subunit protein uL10 from Haemophilus influenzae (strain PittEE).